The chain runs to 704 residues: Polyribonucleotide nucleotidyltransferase (704 aa).

Mg(2+) is bound by residues D485 and D491. The 60-residue stretch at 552–611 folds into the KH domain; the sequence is PRIYTMKIDPKKIKDVIGKGGATIRALTEETGTSIDIDDDGTVKIAAVDGNAVKTVMARI. The 69-residue stretch at 621–689 folds into the S1 motif domain; sequence GAVYTGKVTR…RQGRIRLTMR (69 aa).

It belongs to the polyribonucleotide nucleotidyltransferase family. Component of the RNA degradosome, which is a multiprotein complex involved in RNA processing and mRNA degradation. The cofactor is Mg(2+).

The protein localises to the cytoplasm. The enzyme catalyses RNA(n+1) + phosphate = RNA(n) + a ribonucleoside 5'-diphosphate. Its function is as follows. Involved in mRNA degradation. Catalyzes the phosphorolysis of single-stranded polyribonucleotides processively in the 3'- to 5'-direction. This chain is Polyribonucleotide nucleotidyltransferase, found in Mannheimia succiniciproducens (strain KCTC 0769BP / MBEL55E).